A 768-amino-acid polypeptide reads, in one-letter code: MATEGMILTNHDHQIRVGVLTVSDSCFRNLAEDRSGINLKDLVQDPSLLGGTISAYKIVPDEIEEIKETLIDWCDEKELNLILTTGGTGFAPRDVTPEKFPTFPFCGLQKGATKEVIEREAPGMALAMLMGSLNVTPLGMLSRPVCGIRGKTLIINLPGSKKGSQECFQFILPALPHAIDLLRDAIVKVKEVHDELEDLPSPPPPLSPPPTTSPHKQTEDKGVQCEEEEEEKKDSGVASTEDSSSSHITAAALAAKIPDSIISRGVQVLPRDTASLSTTPSESPRAQATSRLSTASCPTPKQIRRPDESKGVASRVGSLKVQSRCSSKENILRASHSAVDITKVARRHRMSPFPLTSMDKAFITVLEMTPVLGTEIINYRDGMGRVLAQDVYAKDNLPPFPASVKDGYAVRAADGPGDRFIIGESQAGEQPTQTVMPGQVMRVTTGAPIPCGADAVVQVEDTELIRESDDGTEELEVRILVQARPGQDIRPIGHDIKRGECVLAKGTHMGPSEIGLLATVGVTEVEVNKFPVVAVMSTGNELLNPEDDLLPGKIRDSNRSTLLATIQEHGYPTINLGIVGDNPDDLLNALNEGISRADVIITSGGVSMGEKDYLKQVLDIDLHAQIHFGRVFMKPGLPTTFATLDIDGVRKIIFALPGNPVSAVVTCNLFVVPALRKMQGILDPRPTIIKARLSCDVKLDPRPEYHRCILTWHHQEPLPWAQSTGNQMSSRLMSMRSANGLLMLPPKTEQYVELHKGEVVDVMVIGRL.

Residues 14–166 (QIRVGVLTVS…LPGSKKGSQE (153 aa)) are MPT Mo-transferase. The interaction with GABARAP stretch occupies residues 153-348 (LIINLPGSKK…VDITKVARRH (196 aa)). 2 disordered regions span residues 194-245 (DELE…DSSS) and 273-316 (TASL…ASRV). Residues 200–212 (PSPPPPLSPPPTT) show a composition bias toward pro residues. A phosphoserine mark is found at S201 and S207. T211 is subject to Phosphothreonine. At S213 the chain carries Phosphoserine. Residue C225 is the site of S-palmitoyl cysteine attachment. Residues 274 to 299 (ASLSTTPSESPRAQATSRLSTASCPT) show a composition bias toward polar residues. Position 275 is a phosphoserine (S275). Phosphothreonine is present on residues T278 and T279. S281 and S283 each carry phosphoserine. C297 is lipidated: S-palmitoyl cysteine. The interval 326–768 (SSKENILRAS…VVDVMVIGRL (443 aa)) is MPT adenylyltransferase. A Phosphoserine modification is found at S337.

This sequence in the N-terminal section; belongs to the MoaB/Mog family. It in the C-terminal section; belongs to the MoeA family. In terms of assembly, homotrimer, homodimer and homooligomer. Interacts with SRGAP2 (via SH3 domain). Interacts with GLRB. Interacts with GABARAP. Interacts with GABRA3. GABRA3 and GLRB occupy overlapping binding sites. Interacts with ARHGAP32; IQSEC3, INSYN1 and INSYN2A. The cofactor is Mg(2+). Phosphorylated. Post-translationally, palmitoylated. Palmitoylation is stimulated by GABA type A receptors activity. Palmitoylation by ZDHHC12 regulates clustering at synapses. In terms of tissue distribution, expressed in tissues including spinal cord, brain, liver, kidney and lung.

It localises to the postsynaptic cell membrane. Its subcellular location is the cell membrane. The protein localises to the cytoplasm. The protein resides in the cytosol. It is found in the cytoskeleton. It localises to the cell projection. Its subcellular location is the dendrite. The protein localises to the postsynaptic density. The enzyme catalyses molybdopterin + ATP + H(+) = adenylyl-molybdopterin + diphosphate. The catalysed reaction is adenylyl-molybdopterin + molybdate = Mo-molybdopterin + AMP + H(+). The protein operates within cofactor biosynthesis; molybdopterin biosynthesis. With respect to regulation, inhibited by copper and tungsten. In terms of biological role, microtubule-associated protein involved in membrane protein-cytoskeleton interactions. It is thought to anchor the inhibitory glycine receptor (GLYR) to subsynaptic microtubules. Acts as a major instructive molecule at inhibitory synapses, where it also clusters GABA type A receptors. Also has a catalytic activity and catalyzes two steps in the biosynthesis of the molybdenum cofactor. In the first step, molybdopterin is adenylated. Subsequently, molybdate is inserted into adenylated molybdopterin and AMP is released. The chain is Gephyrin (Gphn) from Rattus norvegicus (Rat).